A 778-amino-acid polypeptide reads, in one-letter code: DISP complex protein LRCH3 (778 aa).

LRR repeat units follow at residues 56–79, 81–104, 105–127, 128–150, 152–172, 173–195, 197–218, 220–239, 240–264, and 266–290; these read AAVTGVLSLSGRKLREFPRGAANH, LTDTTRADLSRNRLSEIPMEACHF, VSLESLNLYQNCIRYIPEAVLNL, QALTFLNISRNQLSTLPVHLCNL, LKVLIASNNKLVSLPEEIGHL, RHLTELDVSCNEIQTVPSQIGNL, ALRDFNVRRNHLLRLPEELAEV, LIRLDFSCNKITVIPVCYRN, LRHLQVITLDNNPLQSPPAQICIKG, and IHIFKYLNIQACKIAPDLPDYERRP. Residues 56–290 form a mediates interaction with DOCK7 region; sequence AAVTGVLSLS…PDLPDYERRP (235 aa). Ser324, Ser415, and Ser419 each carry phosphoserine. A mediates direct interaction with MYO6 region spans residues 382–642; the sequence is TTEEEENDVK…PATDPTDAIT (261 aa). Residues 511–536 are disordered; sequence QKASHNPQRQQPPGNGECSFPSRRSQ. Over residues 514–523 the composition is skewed to polar residues; sequence SHNPQRQQPP. Ser608 and Ser625 each carry phosphoserine. In terms of domain architecture, Calponin-homology (CH) spans 645 to 758; the sequence is REEELKLIDQ…VTVQALLELA (114 aa). The disordered stretch occupies residues 758–778; it reads APPKQPPPQQPQQQQPQLSAV. A compositionally biased stretch (low complexity) spans 768–778; sequence PQQQQPQLSAV.

As to quaternary structure, component of the DOCK7-induced septin displacement/DISP complex, at least composed of DOCK7, LRCH3 and MYO6.

It is found in the cytoplasm. Functionally, as part of the DISP complex, may regulate the association of septins with actin and thereby regulate the actin cytoskeleton. The sequence is that of DISP complex protein LRCH3 from Mus musculus (Mouse).